The primary structure comprises 937 residues: Putative leucine-rich repeat receptor-like serine/threonine-protein kinase At3g53590 (937 aa).

The first 20 residues, 1–20 (MIPPNINVLIRSICINLVTS), serve as a signal peptide directing secretion. Topologically, residues 21–547 (LPLNFAYIFI…LLAQTSGIRT (527 aa)) are extracellular. N-linked (GlcNAc...) asparagine glycans are attached at residues N50, N63, N90, and N114. LRR repeat units lie at residues 102 to 126 (LLYLEILDVMWNNLTGRIPLEIGRI), 127 to 150 (SSLKLLLLNGNKFTGSLPPELGNL), 152 to 173 (NLNRLQVDENNITGSVPFSFGN), 174 to 198 (LRSIKHLHLNNNTISGEIPVELSKL), 200 to 222 (KLVHMILDNNNLTGTLPLELAQL), 223 to 249 (PSLTILQLDNNNFEGSTIPEAYGHFSR), 251 to 270 (VKLSLRNCGLQGSIPDLSRI), and 271 to 294 (ENLSYLDLSWNHLTGTIPESKLSD). 3 N-linked (GlcNAc...) asparagine glycosylation sites follow: N162, N184, and N210. Residues N272 and N295 are each glycosylated (N-linked (GlcNAc...) asparagine). LRR repeat units follow at residues 296-316 (MTTIELSYNHLTGSIPQSFSD), 317-341 (LNSLQLLSLENNSLSGSVPTEIWQD), and 343-360 (SFENNKLQVYDLNNNFSD). N-linked (GlcNAc...) asparagine glycans are attached at residues N327, N357, N370, N413, N499, and N516. Residues 548-568 (IVWMMIVAGSVVAATVLSVTA) form a helical membrane-spanning segment. Topologically, residues 569-937 (TLLYVRKRRE…SGFFHAVKPR (369 aa)) are cytoplasmic. The region spanning 614-886 (FDSSTLIGRG…SKVVKELEGI (273 aa)) is the Protein kinase domain. ATP-binding positions include 620–628 (IGRGSYGKV) and K642. The active-site Proton acceptor is D738.

This sequence belongs to the protein kinase superfamily. Ser/Thr protein kinase family.

It localises to the cell membrane. It catalyses the reaction L-seryl-[protein] + ATP = O-phospho-L-seryl-[protein] + ADP + H(+). The enzyme catalyses L-threonyl-[protein] + ATP = O-phospho-L-threonyl-[protein] + ADP + H(+). The protein is Putative leucine-rich repeat receptor-like serine/threonine-protein kinase At3g53590 of Arabidopsis thaliana (Mouse-ear cress).